A 337-amino-acid polypeptide reads, in one-letter code: 5-formaminoimidazole-4-carboxamide-1-(beta)-D-ribofuranosyl 5'-monophosphate synthetase (337 aa).

5-amino-1-(5-phospho-beta-D-ribosyl)imidazole-4-carboxamide-binding residues include His9 and Ser73. An ATP-grasp domain is found at 94–324; the sequence is KKIFEWEADQ…IGRRIAREIR (231 aa). ATP contacts are provided by residues 124-184 and Glu206; that span reads PEDV…VPMY. Residue Asn234 participates in 5-amino-1-(5-phospho-beta-D-ribosyl)imidazole-4-carboxamide binding. 2 residues coordinate Mg(2+): Glu273 and Glu286.

Belongs to the phosphohexose mutase family. Mg(2+) is required as a cofactor. It depends on Mn(2+) as a cofactor.

It carries out the reaction 5-amino-1-(5-phospho-beta-D-ribosyl)imidazole-4-carboxamide + formate + ATP = 5-formamido-1-(5-phospho-D-ribosyl)imidazole-4-carboxamide + ADP + phosphate. It participates in purine metabolism; IMP biosynthesis via de novo pathway; 5-formamido-1-(5-phospho-D-ribosyl)imidazole-4-carboxamide from 5-amino-1-(5-phospho-D-ribosyl)imidazole-4-carboxamide (formate route): step 1/1. Its function is as follows. Catalyzes the ATP- and formate-dependent formylation of 5-aminoimidazole-4-carboxamide-1-beta-d-ribofuranosyl 5'-monophosphate (AICAR) to 5-formaminoimidazole-4-carboxamide-1-beta-d-ribofuranosyl 5'-monophosphate (FAICAR) in the absence of folates. The chain is 5-formaminoimidazole-4-carboxamide-1-(beta)-D-ribofuranosyl 5'-monophosphate synthetase from Saccharolobus solfataricus (strain ATCC 35092 / DSM 1617 / JCM 11322 / P2) (Sulfolobus solfataricus).